Here is a 217-residue protein sequence, read N- to C-terminus: tRNA 5-hydroxyuridine methyltransferase (217 aa).

Residues Met-38, Ser-68, Glu-85, 113–114 (DA), and Asp-133 each bind S-adenosyl-L-methionine. Mg(2+)-binding residues include Asp-133, Asp-159, and Asn-160.

The protein belongs to the class I-like SAM-binding methyltransferase superfamily. Cation-dependent O-methyltransferase family. In terms of assembly, homodimer.

The catalysed reaction is 5-hydroxyuridine(34) in tRNA + S-adenosyl-L-methionine = 5-methoxyuridine(34) in tRNA + S-adenosyl-L-homocysteine + H(+). In terms of biological role, catalyzes the methylation of 5-hydroxyuridine (ho5U) to form 5-methoxyuridine (mo5U) at position 34 in tRNAs. In Bacillus subtilis (strain 168), this protein is tRNA 5-hydroxyuridine methyltransferase.